The following is a 140-amino-acid chain: ATP synthase epsilon chain (140 aa).

This sequence belongs to the ATPase epsilon chain family. F-type ATPases have 2 components, CF(1) - the catalytic core - and CF(0) - the membrane proton channel. CF(1) has five subunits: alpha(3), beta(3), gamma(1), delta(1), epsilon(1). CF(0) has three main subunits: a, b and c.

It localises to the cell inner membrane. In terms of biological role, produces ATP from ADP in the presence of a proton gradient across the membrane. The sequence is that of ATP synthase epsilon chain from Nitrosomonas eutropha (strain DSM 101675 / C91 / Nm57).